The primary structure comprises 49 residues: Defensin Tk-AMP-D1 (49 aa).

4 disulfide bridges follow: Cys3–Cys49, Cys14–Cys34, Cys20–Cys43, and Cys24–Cys45.

Its function is as follows. Has weak antifungal activity against F.graminearum and F.verticillioides below 30 ug/ml, but not against A.consortiale B.cinerea, H.sativum, F.culmorum, C.graminicola and D.maydis. This Triticum kiharae (Wheat) protein is Defensin Tk-AMP-D1.